Here is a 287-residue protein sequence, read N- to C-terminus: Bifunctional protein FolD 1 (287 aa).

NADP(+) is bound by residues 170-172 (GRS) and Ser-195.

This sequence belongs to the tetrahydrofolate dehydrogenase/cyclohydrolase family. Homodimer.

It catalyses the reaction (6R)-5,10-methylene-5,6,7,8-tetrahydrofolate + NADP(+) = (6R)-5,10-methenyltetrahydrofolate + NADPH. It carries out the reaction (6R)-5,10-methenyltetrahydrofolate + H2O = (6R)-10-formyltetrahydrofolate + H(+). It functions in the pathway one-carbon metabolism; tetrahydrofolate interconversion. Functionally, catalyzes the oxidation of 5,10-methylenetetrahydrofolate to 5,10-methenyltetrahydrofolate and then the hydrolysis of 5,10-methenyltetrahydrofolate to 10-formyltetrahydrofolate. This chain is Bifunctional protein FolD 1, found in Streptomyces avermitilis (strain ATCC 31267 / DSM 46492 / JCM 5070 / NBRC 14893 / NCIMB 12804 / NRRL 8165 / MA-4680).